A 246-amino-acid polypeptide reads, in one-letter code: tRNA (cytidine/uridine-2'-O-)-methyltransferase TrmJ (246 aa).

S-adenosyl-L-methionine-binding positions include 79–81 (TSA), glycine 114, isoleucine 134, and 141–143 (SSL).

This sequence belongs to the class IV-like SAM-binding methyltransferase superfamily. RNA methyltransferase TrmH family. As to quaternary structure, homodimer.

Its subcellular location is the cytoplasm. It catalyses the reaction cytidine(32) in tRNA + S-adenosyl-L-methionine = 2'-O-methylcytidine(32) in tRNA + S-adenosyl-L-homocysteine + H(+). The catalysed reaction is uridine(32) in tRNA + S-adenosyl-L-methionine = 2'-O-methyluridine(32) in tRNA + S-adenosyl-L-homocysteine + H(+). In terms of biological role, catalyzes the formation of 2'O-methylated cytidine (Cm32) or 2'O-methylated uridine (Um32) at position 32 in tRNA. The chain is tRNA (cytidine/uridine-2'-O-)-methyltransferase TrmJ (trmJ) from Escherichia coli O1:K1 / APEC.